The chain runs to 828 residues: Leucine--tRNA ligase (828 aa).

The 'HIGH' region signature appears at 36-46 (PYPSGKIHIGH). The 'KMSKS' region motif lies at 595–599 (KMSKS). Lys-598 serves as a coordination point for ATP.

Belongs to the class-I aminoacyl-tRNA synthetase family.

Its subcellular location is the cytoplasm. It catalyses the reaction tRNA(Leu) + L-leucine + ATP = L-leucyl-tRNA(Leu) + AMP + diphosphate. The chain is Leucine--tRNA ligase from Rickettsia typhi (strain ATCC VR-144 / Wilmington).